The following is a 110-amino-acid chain: UPF0122 protein SERP0802 (110 aa).

It belongs to the UPF0122 family.

Its function is as follows. Might take part in the signal recognition particle (SRP) pathway. This is inferred from the conservation of its genetic proximity to ftsY/ffh. May be a regulatory protein. The polypeptide is UPF0122 protein SERP0802 (Staphylococcus epidermidis (strain ATCC 35984 / DSM 28319 / BCRC 17069 / CCUG 31568 / BM 3577 / RP62A)).